We begin with the raw amino-acid sequence, 200 residues long: MKPYRDYYFLKAKHEKYPARSIYKLKEIDNRFCLFQKGMSVLDLGASPGSWSLGAAEKVGKTGRVVSCDIQTITIPLPSNVSFFQEDIFHRSDSFNNILIKEGPFHVIMSDMAPQTTGVKITDHSRSLELCLEALAIAKCYLLQQGSFIVKIFMGADTIELVKEMRQHFERVTSFKPCSSRTKSKEIFYVGLGFKRFTTS.

The S-adenosyl-L-methionine site is built by Gly-49, Trp-51, Asp-69, Asp-87, and Asp-111. Lys-151 serves as the catalytic Proton acceptor.

It belongs to the class I-like SAM-binding methyltransferase superfamily. RNA methyltransferase RlmE family.

It localises to the cytoplasm. The catalysed reaction is uridine(2552) in 23S rRNA + S-adenosyl-L-methionine = 2'-O-methyluridine(2552) in 23S rRNA + S-adenosyl-L-homocysteine + H(+). Functionally, specifically methylates the uridine in position 2552 of 23S rRNA at the 2'-O position of the ribose in the fully assembled 50S ribosomal subunit. This is Ribosomal RNA large subunit methyltransferase E from Lawsonia intracellularis (strain PHE/MN1-00).